The chain runs to 705 residues: Translation initiation factor IF-2 (705 aa).

Residues 40–124 are disordered; that stretch reads DDQIKALDKK…QPAAPKEIPS (85 aa). Basic and acidic residues predominate over residues 41 to 58; that stretch reads DQIKALDKKFKKEQKNDN. Low complexity predominate over residues 59–77; that stretch reads KQSTQNNHQKSNNQNQNKG. Positions 94–108 are enriched in basic residues; that stretch reads KGNKKNNRNNKKNNK. The tr-type G domain maps to 207–376; it reads ERPAVVTIMG…GLVAEVQELK (170 aa). Residues 216 to 223 form a G1 region; it reads GHVDHGKT. Position 216–223 (216–223) interacts with GTP; the sequence is GHVDHGKT. A G2 region spans residues 241–245; that stretch reads GITQH. The segment at 262–265 is G3; sequence DTPG. GTP contacts are provided by residues 262 to 266 and 316 to 319; these read DTPGH and NKID. Residues 316-319 are G4; that stretch reads NKID. The interval 352 to 354 is G5; the sequence is SAL.

The protein belongs to the TRAFAC class translation factor GTPase superfamily. Classic translation factor GTPase family. IF-2 subfamily.

It is found in the cytoplasm. Functionally, one of the essential components for the initiation of protein synthesis. Protects formylmethionyl-tRNA from spontaneous hydrolysis and promotes its binding to the 30S ribosomal subunits. Also involved in the hydrolysis of GTP during the formation of the 70S ribosomal complex. The protein is Translation initiation factor IF-2 of Staphylococcus aureus (strain MRSA252).